Here is a 448-residue protein sequence, read N- to C-terminus: Trigger factor (448 aa).

The PPIase FKBP-type domain maps to glycine 172–proline 257.

Belongs to the FKBP-type PPIase family. Tig subfamily.

It is found in the cytoplasm. It catalyses the reaction [protein]-peptidylproline (omega=180) = [protein]-peptidylproline (omega=0). Its function is as follows. Involved in protein export. Acts as a chaperone by maintaining the newly synthesized protein in an open conformation. Functions as a peptidyl-prolyl cis-trans isomerase. In Burkholderia ambifaria (strain ATCC BAA-244 / DSM 16087 / CCUG 44356 / LMG 19182 / AMMD) (Burkholderia cepacia (strain AMMD)), this protein is Trigger factor.